Reading from the N-terminus, the 163-residue chain is Nucleotide-binding protein tll0793 (163 aa).

Belongs to the YajQ family.

Functionally, nucleotide-binding protein. In Thermosynechococcus vestitus (strain NIES-2133 / IAM M-273 / BP-1), this protein is Nucleotide-binding protein tll0793.